A 352-amino-acid chain; its full sequence is Heat-inducible transcription repressor HrcA (352 aa).

It belongs to the HrcA family.

Its function is as follows. Negative regulator of class I heat shock genes (grpE-dnaK-dnaJ and groELS operons). Prevents heat-shock induction of these operons. The protein is Heat-inducible transcription repressor HrcA of Latilactobacillus sakei (Lactobacillus sakei).